Consider the following 399-residue polypeptide: Tryptophan synthase beta chain (399 aa).

Residue Lys-92 is modified to N6-(pyridoxal phosphate)lysine.

The protein belongs to the TrpB family. As to quaternary structure, tetramer of two alpha and two beta chains. Requires pyridoxal 5'-phosphate as cofactor.

It carries out the reaction (1S,2R)-1-C-(indol-3-yl)glycerol 3-phosphate + L-serine = D-glyceraldehyde 3-phosphate + L-tryptophan + H2O. It functions in the pathway amino-acid biosynthesis; L-tryptophan biosynthesis; L-tryptophan from chorismate: step 5/5. In terms of biological role, the beta subunit is responsible for the synthesis of L-tryptophan from indole and L-serine. The sequence is that of Tryptophan synthase beta chain from Legionella pneumophila subsp. pneumophila (strain Philadelphia 1 / ATCC 33152 / DSM 7513).